The sequence spans 220 residues: MKIDILDKGFVELVDVMGNDLSAVRAARVSFDMGLKDEERDRHLIEYLMKHGHETPFEHIVFTFHVKAPIFVARQWFRHRIASYNELSGRYSKLSYEFYIPSPERLEGYKTTIPPERVTEKISEIVDKAYRTYLELIESGVPREVARIVLPLNLYTRFFWTVNARSLMNFLNLRADSHAQWEIQQYALAIARIFKEKCPWTFEAFLKYAYKGDILKEVQV.

The ThyX domain occupies 1–208; that stretch reads MKIDILDKGF…PWTFEAFLKY (208 aa). FAD-binding positions include T55, 78–81, and E86; that span reads RHRI. DUMP-binding positions include 75–78, 86–90, and R147; these read QWFR and ELSGR. A ThyX motif motif is present at residues 78–88; that stretch reads RHRIASYNELS. FAD contacts are provided by residues 163–165 and N169; that span reads NAR. Position 174 (R174) interacts with dUMP. The active-site Involved in ionization of N3 of dUMP, leading to its activation is R174.

The protein belongs to the thymidylate synthase ThyX family. Homotetramer. It depends on FAD as a cofactor.

The catalysed reaction is dUMP + (6R)-5,10-methylene-5,6,7,8-tetrahydrofolate + NADPH + H(+) = dTMP + (6S)-5,6,7,8-tetrahydrofolate + NADP(+). The enzyme catalyses dUMP + formaldehyde + NADPH + H(+) = dTMP + NADP(+) + H2O. The protein operates within pyrimidine metabolism; dTTP biosynthesis. Its function is as follows. Catalyzes the reductive methylation of 2'-deoxyuridine-5'-monophosphate (dUMP or deoxyuridylate) to 2'-deoxythymidine-5'-monophosphate (dTMP or deoxythymidylate) while utilizing 5,10-methylenetetrahydrofolate (mTHF) as the methylene donor, and NAD(P)H and FADH(2) as the reductant. This reaction is a critical step in DNA biosynthesis. Can also use formaldehyde instead of mTHF as a direct methylene donor for dTMP synthesis. However, the tighter binding of ThyX to mTHF (KD of 4 uM) compared to formaldehyde (KD of 20 mM) confirms that methylene tetrahydrofolate acts as the biological carbon donor for ThyX, serving as a formaldehyde carrier/transporter and thus avoiding genotoxic effects. The protein is Flavin-dependent thymidylate synthase of Thermotoga maritima (strain ATCC 43589 / DSM 3109 / JCM 10099 / NBRC 100826 / MSB8).